Reading from the N-terminus, the 367-residue chain is Phosphoribosylaminoimidazole-succinocarboxamide synthase (367 aa).

This sequence belongs to the SAICAR synthetase family.

The catalysed reaction is 5-amino-1-(5-phospho-D-ribosyl)imidazole-4-carboxylate + L-aspartate + ATP = (2S)-2-[5-amino-1-(5-phospho-beta-D-ribosyl)imidazole-4-carboxamido]succinate + ADP + phosphate + 2 H(+). The protein operates within purine metabolism; IMP biosynthesis via de novo pathway; 5-amino-1-(5-phospho-D-ribosyl)imidazole-4-carboxamide from 5-amino-1-(5-phospho-D-ribosyl)imidazole-4-carboxylate: step 1/2. The chain is Phosphoribosylaminoimidazole-succinocarboxamide synthase from Colwellia psychrerythraea (strain 34H / ATCC BAA-681) (Vibrio psychroerythus).